The chain runs to 400 residues: Argininosuccinate synthase (400 aa).

8–16 (AYSGGLDTS) serves as a coordination point for ATP. Tyrosine 87 serves as a coordination point for L-citrulline. Glycine 117 lines the ATP pocket. L-aspartate-binding residues include threonine 119, asparagine 123, and aspartate 124. Asparagine 123 contributes to the L-citrulline binding site. Residues arginine 127, serine 175, glutamate 260, and tyrosine 272 each coordinate L-citrulline.

The protein belongs to the argininosuccinate synthase family. Type 1 subfamily. As to quaternary structure, homotetramer.

It is found in the cytoplasm. It carries out the reaction L-citrulline + L-aspartate + ATP = 2-(N(omega)-L-arginino)succinate + AMP + diphosphate + H(+). It functions in the pathway amino-acid biosynthesis; L-arginine biosynthesis; L-arginine from L-ornithine and carbamoyl phosphate: step 2/3. The chain is Argininosuccinate synthase from Mycobacterium sp. (strain JLS).